Reading from the N-terminus, the 594-residue chain is 4-alpha-glucanotransferase DPE1, chloroplastic/amyloplastic (594 aa).

The transit peptide at 1–37 (MATLSLPLPHLTQAIPARARPRPRPLRGIPARLLSCR) directs the protein to the chloroplast.

It belongs to the disproportionating enzyme family.

The protein localises to the plastid. It is found in the chloroplast. The protein resides in the amyloplast. The enzyme catalyses Transfers a segment of a (1-&gt;4)-alpha-D-glucan to a new position in an acceptor, which may be glucose or a (1-&gt;4)-alpha-D-glucan.. Functionally, chloroplastic alpha-glucanotransferase involved in maltotriose metabolism. The sequence is that of 4-alpha-glucanotransferase DPE1, chloroplastic/amyloplastic (DPE1) from Oryza sativa subsp. japonica (Rice).